The chain runs to 682 residues: tRNA(Met) cytidine acetyltransferase TmcA (682 aa).

Residues Gln176, 198 to 207, and Arg320 each bind ATP; that span reads GRGKSTLAGM. The 178-residue stretch at 357-534 folds into the N-acetyltransferase domain; it reads QQQWIQQPEL…SGCYTAMAIF (178 aa). Acetyl-CoA is bound by residues 462-464 and Glu502; that span reads VAV.

This sequence belongs to the RNA cytidine acetyltransferase family. TmcA subfamily.

The protein localises to the cytoplasm. It catalyses the reaction cytidine(34) in elongator tRNA(Met) + acetyl-CoA + ATP + H2O = N(4)-acetylcytidine(34) in elongator tRNA(Met) + ADP + phosphate + CoA + H(+). Functionally, catalyzes the formation of N(4)-acetylcytidine (ac(4)C) at the wobble position of tRNA(Met), by using acetyl-CoA as an acetyl donor and ATP (or GTP). In Photorhabdus asymbiotica subsp. asymbiotica (strain ATCC 43949 / 3105-77) (Xenorhabdus luminescens (strain 2)), this protein is tRNA(Met) cytidine acetyltransferase TmcA.